We begin with the raw amino-acid sequence, 572 residues long: Light-independent protochlorophyllide reductase subunit N (572 aa).

[4Fe-4S] cluster is bound by residues C106, C131, and C191. The interval 249 to 268 is disordered; the sequence is SLDSMKLPSGGREKQINDVN.

Belongs to the BchN/ChlN family. As to quaternary structure, protochlorophyllide reductase is composed of three subunits; ChlL, ChlN and ChlB. Forms a heterotetramer of two ChlB and two ChlN subunits. [4Fe-4S] cluster is required as a cofactor.

It localises to the plastid. The protein localises to the chloroplast. It catalyses the reaction chlorophyllide a + oxidized 2[4Fe-4S]-[ferredoxin] + 2 ADP + 2 phosphate = protochlorophyllide a + reduced 2[4Fe-4S]-[ferredoxin] + 2 ATP + 2 H2O. Its pathway is porphyrin-containing compound metabolism; chlorophyll biosynthesis (light-independent). Component of the dark-operative protochlorophyllide reductase (DPOR) that uses Mg-ATP and reduced ferredoxin to reduce ring D of protochlorophyllide (Pchlide) to form chlorophyllide a (Chlide). This reaction is light-independent. The NB-protein (ChlN-ChlB) is the catalytic component of the complex. The protein is Light-independent protochlorophyllide reductase subunit N of Oltmannsiellopsis viridis (Marine flagellate).